Consider the following 108-residue polypeptide: FK506-binding protein 1 (108 aa).

Residues 20–108 enclose the PPIase FKBP-type domain; it reads GDSVTIHYVG…KFEVELLKIN (89 aa).

The protein belongs to the FKBP-type PPIase family. FKBP1 subfamily.

The protein localises to the cytoplasm. The catalysed reaction is [protein]-peptidylproline (omega=180) = [protein]-peptidylproline (omega=0). With respect to regulation, inhibited by both FK506 and rapamycin. PPIases accelerate the folding of proteins. It catalyzes the cis-trans isomerization of proline imidic peptide bonds in oligopeptides. The protein is FK506-binding protein 1 (FPR1) of Cryptococcus neoformans var. neoformans serotype D (strain JEC21 / ATCC MYA-565) (Filobasidiella neoformans).